The sequence spans 1023 residues: 2-oxoglutarate dehydrogenase complex component E1 (1023 aa).

The transit peptide at 1 to 40 directs the protein to the mitochondrion; it reads MFHLRTCAAKLRPLTASQTVKTFSQNKPAAIRTFQQIRCY. N6-succinyllysine is present on Lys-74. Residue Ser-100 is modified to Phosphoserine. 3 residues coordinate Ca(2+): His-143, Asp-156, and Asp-158. Arg-312 lines the thiamine diphosphate pocket. Lys-401 bears the N6-acetyllysine mark. The thiamine diphosphate site is built by Asp-411, Asn-444, and Ile-446. Positions 411, 444, and 446 each coordinate Mg(2+). Residue Lys-534 forms a Glycyl lysine isopeptide (Lys-Gly) (interchain with G-Cter in ubiquitin) linkage. Residue Lys-564 is modified to N6-succinyllysine. Gln-676 is a binding site for thiamine diphosphate. Residues 933–939 are recognized by alloreactive CD8 cytotoxic T-lymphocytes in association with a class I MHC protein; it reads LSPFPFD. An N6-acetyllysine modification is found at Lys-970.

Belongs to the alpha-ketoglutarate dehydrogenase family. Homodimer. The 2-oxoglutarate dehydrogenase complex is composed of OGDH (2-oxoglutarate dehydrogenase; E1), DLST (dihydrolipoamide succinyltransferase; E2), DLD (dihydrolipoamide dehydrogenase; E3) and the assembly factor KGD4. It contains multiple copies of the three enzymatic components (E1, E2 and E3). In the nucleus, the 2-oxoglutarate dehydrogenase complex associates with KAT2A. Interacts with ABHD11; this interaction maintains the functional lipoylation of the 2-oxoglutarate dehydrogenase complex. The cofactor is thiamine diphosphate. Mg(2+) serves as cofactor.

The protein localises to the mitochondrion. The protein resides in the nucleus. The enzyme catalyses N(6)-[(R)-lipoyl]-L-lysyl-[protein] + 2-oxoglutarate + H(+) = N(6)-[(R)-S(8)-succinyldihydrolipoyl]-L-lysyl-[protein] + CO2. Its activity is regulated as follows. Calcium ions and ADP stimulate, whereas ATP and NADH reduce catalytic activity. Its function is as follows. 2-oxoglutarate dehydrogenase (E1o) component of the 2-oxoglutarate dehydrogenase complex (OGDHC). Participates in the first step, rate limiting for the overall conversion of 2-oxoglutarate to succinyl-CoA and CO(2) catalyzed by the whole OGDHC. Catalyzes the irreversible decarboxylation of 2-oxoglutarate (alpha-ketoglutarate) via the thiamine diphosphate (ThDP) cofactor and subsequent transfer of the decarboxylated acyl intermediate on an oxidized dihydrolipoyl group that is covalently amidated to the E2 enzyme (dihydrolipoyllysine-residue succinyltransferase or DLST). Plays a key role in the Krebs (citric acid) cycle, which is a common pathway for oxidation of fuel molecules, including carbohydrates, fatty acids, and amino acids. Can catalyze the decarboxylation of 2-oxoadipate in vitro, but at a much lower rate than 2-oxoglutarate. Mainly active in the mitochondrion. A fraction of the 2-oxoglutarate dehydrogenase complex also localizes in the nucleus and is required for lysine succinylation of histones: associates with KAT2A on chromatin and provides succinyl-CoA to histone succinyltransferase KAT2A. The sequence is that of 2-oxoglutarate dehydrogenase complex component E1 from Mus musculus (Mouse).